We begin with the raw amino-acid sequence, 324 residues long: Endochitinase B (324 aa).

The first 23 residues, 1 to 23 (MRLREFTALSSLLFSLLLLSASA), serve as a signal peptide directing secretion. One can recognise a Chitin-binding type-1 domain in the interval 24–65 (EQCGSQAGGARCASGLCCSKFGWCGNTNDYCGPGNCQSQCPG). Disulfide bonds link cysteine 26-cysteine 41, cysteine 35-cysteine 47, cysteine 40-cysteine 54, and cysteine 59-cysteine 63. 2 positions are modified to 4-hydroxyproline: proline 67 and proline 69. Intrachain disulfides connect cysteine 96–cysteine 158, cysteine 170–cysteine 178, and cysteine 277–cysteine 309. Catalysis depends on glutamate 140, which acts as the Proton donor. Residues 318-324 (GLLVDTM) constitute a propeptide, removed in mature form.

It belongs to the glycosyl hydrolase 19 family. Chitinase class I subfamily. In terms of processing, the 4-hydroxyproline residues are not glycosylated in this plant vacuolar protein.

The protein resides in the vacuole. The enzyme catalyses Random endo-hydrolysis of N-acetyl-beta-D-glucosaminide (1-&gt;4)-beta-linkages in chitin and chitodextrins.. Functionally, defense against chitin-containing fungal pathogens. The polypeptide is Endochitinase B (CHN50) (Nicotiana tabacum (Common tobacco)).